The chain runs to 382 residues: Sad1-interacting factor 2 (382 aa).

Ser-135 bears the Phosphoserine mark. A helical transmembrane segment spans residues 356 to 376 (EWIVVILMGLLVLIALFSIVV).

This sequence belongs to the RMD1/sif2 family. As to quaternary structure, interacts with sad1.

It is found in the nucleus membrane. In terms of biological role, required for sporulation where it is believed to have a role in meiotic nuclear division. This is Sad1-interacting factor 2 (sif2) from Schizosaccharomyces pombe (strain 972 / ATCC 24843) (Fission yeast).